Here is a 229-residue protein sequence, read N- to C-terminus: Aminodeoxyfutalosine nucleosidase (229 aa).

The active-site Proton acceptor is E13. Residues G79, I153, and 173 to 174 (ME) each bind substrate. Catalysis depends on D197, which acts as the Proton donor.

This sequence belongs to the PNP/UDP phosphorylase family. As to quaternary structure, homodimer.

It catalyses the reaction 6-amino-6-deoxyfutalosine + H2O = dehypoxanthine futalosine + adenine. The enzyme catalyses S-adenosyl-L-homocysteine + H2O = S-(5-deoxy-D-ribos-5-yl)-L-homocysteine + adenine. It carries out the reaction S-methyl-5'-thioadenosine + H2O = 5-(methylsulfanyl)-D-ribose + adenine. The catalysed reaction is 5'-deoxyadenosine + H2O = 5-deoxy-D-ribose + adenine. It participates in quinol/quinone metabolism; menaquinone biosynthesis. It functions in the pathway amino-acid biosynthesis; L-methionine biosynthesis via salvage pathway; S-methyl-5-thio-alpha-D-ribose 1-phosphate from S-methyl-5'-thioadenosine (hydrolase route): step 1/2. Catalyzes the direct conversion of aminodeoxyfutalosine (AFL) into dehypoxanthine futalosine (DHFL) and adenine via the hydrolysis of the N-glycosidic bond; this reaction seems to represent an essential step in the menaquinone biosynthesis pathway in Campylobacter species. Also catalyzes the hydrolysis of 5'-methylthioadenosine (MTA) to adenine and 5'-methylthioribose. Can also probably use S-adenosylhomocysteine (SAH) as substrate, leading to adenine and S-ribosylhomocysteine. These other activities highlight the tremendous versatility of the enzyme, which also plays key roles in S-adenosylmethionine recycling and in the biosynthesis of the quorum-sensing molecule autoinducer-2. Shows negligible activity with futalosine (FL) as substrate. This Campylobacter jejuni subsp. jejuni serotype O:2 (strain ATCC 700819 / NCTC 11168) protein is Aminodeoxyfutalosine nucleosidase (pfs).